Reading from the N-terminus, the 307-residue chain is Taste receptor type 2 member 41 (307 aa).

Residues 1-7 (MQAALMA) are Extracellular-facing. The chain crosses the membrane as a helical span at residues 8 to 28 (FFMLLFSLLSLLGIAANGFIV). Over 29–40 (LVLGREWLRYGR) the chain is Cytoplasmic. Residues 41-61 (LLPLDMILISLGASRXCLQLV) form a helical membrane-spanning segment. Topologically, residues 62–88 (GTVHNFYYSARKVEYSGGLGRQFFHLH) are extracellular. A helical transmembrane segment spans residues 89 to 109 (WHFLNSATFWFCSWLSVLFCV). Topologically, residues 110-129 (KIANITHPTFLWLKWRFPGW) are cytoplasmic. A helical membrane pass occupies residues 130 to 150 (VPWLLLGSVLISFIITLLFFW). At 151–183 (VNYPVYQELLIRKFSGNMTYKWNTRIETYYFPS) the chain is on the extracellular side. The N-linked (GlcNAc...) asparagine glycan is linked to Asn-167. The helical transmembrane segment at 184–204 (LKLVIWSIPFSVFLVSIMLLI) threads the bilayer. The Cytoplasmic segment spans residues 205-234 (NSLRRHTQRMQHNGHSLQDPSTQAHTRALK). The chain crosses the membrane as a helical span at residues 235–255 (SLISFLFLYALSFLSLIIDAT). Residues 256–264 (KFISMQNDF) lie on the Extracellular side of the membrane. The helical transmembrane segment at 265-285 (YWPWQIAVYLCISVHPFILIF) threads the bilayer. Over 286–307 (SNLKLRSMFWQVLLLARGFWVA) the chain is Cytoplasmic.

Belongs to the G-protein coupled receptor T2R family.

Its subcellular location is the membrane. Its function is as follows. Receptor that may play a role in the perception of bitterness and is gustducin-linked. May play a role in sensing the chemical composition of the gastrointestinal content. The activity of this receptor may stimulate alpha gustducin, mediate PLC-beta-2 activation and lead to the gating of TRPM5. In Gorilla gorilla gorilla (Western lowland gorilla), this protein is Taste receptor type 2 member 41 (TAS2R41).